We begin with the raw amino-acid sequence, 92 residues long: Em-like protein GEA6 (92 aa).

Composition is skewed to basic and acidic residues over residues 1–18 (MASQ…KKGE) and 37–51 (AEGR…KEQL). The disordered stretch occupies residues 1 to 92 (MASQQEKKQL…IDESKFRTKT (92 aa)).

Belongs to the small hydrophilic plant seed protein family. In terms of tissue distribution, present only in nearly dry and dry seeds.

Its function is as follows. It is thought to provide protection for the cytoplasm during the desiccation stage of embryo development. This is Em-like protein GEA6 (EM6) from Arabidopsis thaliana (Mouse-ear cress).